The following is an 831-amino-acid chain: Multiphosphoryl transfer protein 1 (831 aa).

The HPr domain maps to 1 to 90 (MLTIQFLCPL…EYIQVRFIDS (90 aa)). Catalysis depends on histidine 15, which acts as the Pros-phosphohistidine intermediate; for HPr activity. Histidine 15 carries the phosphohistidine; by EI modification. The tract at residues 119–650 (GNVLASGVGV…AVKSQLRQLD (532 aa)) is PTS EI. Residue histidine 298 is the Tele-phosphohistidine intermediate; for PTS EI activity of the active site. Residue histidine 298 is modified to Phosphohistidine; by autocatalysis. Residues arginine 405 and arginine 441 each coordinate phosphoenolpyruvate. Mg(2+) contacts are provided by glutamate 540 and aspartate 564. Residues 563–564 (ND) and arginine 574 contribute to the phosphoenolpyruvate site. Residue cysteine 611 is the Proton donor; for EI activity of the active site. The region spanning 685-828 (PLLALENIFV…QSILTLLETE (144 aa)) is the PTS EIIA type-2 domain. The active-site Tele-phosphohistidine intermediate; for PTS EIIA activity is the histidine 747. Histidine 747 bears the Phosphohistidine; by HPr mark.

It belongs to the PEP-utilizing enzyme family. Mg(2+) serves as cofactor.

Its subcellular location is the cytoplasm. The catalysed reaction is L-histidyl-[protein] + phosphoenolpyruvate = N(pros)-phospho-L-histidyl-[protein] + pyruvate. It carries out the reaction D-fructose(out) + N(pros)-phospho-L-histidyl-[protein] = D-fructose 1-phosphate(in) + L-histidyl-[protein]. In terms of biological role, multifunctional protein that includes general (non sugar-specific) and sugar-specific components of the phosphoenolpyruvate-dependent sugar phosphotransferase system (sugar PTS). This major carbohydrate active transport system catalyzes the phosphorylation of incoming sugar substrates concomitantly with their translocation across the cell membrane. The enzyme II FryABC PTS system is involved in fructose transport. This Escherichia coli (strain K12) protein is Multiphosphoryl transfer protein 1 (fryA).